The primary structure comprises 290 residues: 4-hydroxy-tetrahydrodipicolinate synthase (290 aa).

A pyruvate-binding site is contributed by Thr-44. The active-site Proton donor/acceptor is the Tyr-132. Residue Lys-160 is the Schiff-base intermediate with substrate of the active site. Ile-202 is a pyruvate binding site.

The protein belongs to the DapA family. In terms of assembly, homotetramer; dimer of dimers.

It is found in the cytoplasm. The enzyme catalyses L-aspartate 4-semialdehyde + pyruvate = (2S,4S)-4-hydroxy-2,3,4,5-tetrahydrodipicolinate + H2O + H(+). It participates in amino-acid biosynthesis; L-lysine biosynthesis via DAP pathway; (S)-tetrahydrodipicolinate from L-aspartate: step 3/4. Functionally, catalyzes the condensation of (S)-aspartate-beta-semialdehyde [(S)-ASA] and pyruvate to 4-hydroxy-tetrahydrodipicolinate (HTPA). This is 4-hydroxy-tetrahydrodipicolinate synthase from Pelobacter propionicus (strain DSM 2379 / NBRC 103807 / OttBd1).